The following is a 1038-amino-acid chain: Translation initiation factor IF-2 (1038 aa).

A disordered region spans residues 48 to 426 (DALQGPGGNA…RQRRQEYEAM (379 aa)). Positions 58-87 (GKSAAKPGAPRKAAPAKPAAPSPAAAARPA) are enriched in low complexity. The span at 88–99 (APKPGAPAPKPA) shows a compositional bias: pro residues. Residues 100–114 (EAPSSTPAAPSAPSA) show a composition bias toward low complexity. Residues 115 to 125 (GPRPGPKPAPK) show a composition bias toward pro residues. Residues 126-141 (AAPVTPVPAAEFSAPA) show a composition bias toward low complexity. Residues 142–153 (PAQPAAPQPQAP) are compositionally biased toward pro residues. Residues 177–199 (DGGRDGGQRDGGRGGERGGDRPA) show a composition bias toward basic and acidic residues. Over residues 200 to 219 (RPAGQGAPRPGGARPAGPRP) the composition is skewed to low complexity. Residues 261-277 (SGPGGAPRPQGGQGQGG) show a composition bias toward gly residues. Over residues 299-315 (GNRPNPGMMPQRPAAGP) the composition is skewed to low complexity. Over residues 319–406 (PGGGGRGPGG…GTQGAFGRPG (88 aa)) the composition is skewed to gly residues. Positions 410 to 419 (RRGRKSKRQR) are enriched in basic residues. The 173-residue stretch at 531–703 (SRPPVVTVMG…VVLTADASLD (173 aa)) folds into the tr-type G domain. The interval 540 to 547 (GHVDHGKT) is G1. Residue 540-547 (GHVDHGKT) coordinates GTP. Residues 565–569 (GITQH) are G2. The segment at 590–593 (DTPG) is G3. GTP is bound by residues 590–594 (DTPGH) and 644–647 (NKID). A G4 region spans residues 644–647 (NKID). Positions 680–682 (SAK) are G5.

Belongs to the TRAFAC class translation factor GTPase superfamily. Classic translation factor GTPase family. IF-2 subfamily.

It localises to the cytoplasm. Its function is as follows. One of the essential components for the initiation of protein synthesis. Protects formylmethionyl-tRNA from spontaneous hydrolysis and promotes its binding to the 30S ribosomal subunits. Also involved in the hydrolysis of GTP during the formation of the 70S ribosomal complex. This is Translation initiation factor IF-2 from Streptomyces griseus subsp. griseus (strain JCM 4626 / CBS 651.72 / NBRC 13350 / KCC S-0626 / ISP 5235).